A 281-amino-acid chain; its full sequence is UPF0750 membrane protein YvjA (281 aa).

5 helical membrane passes run 14–34 (YVYILIGAAITAVSFNVFLLP), 56–76 (AAYVQWIINIPLFIAGVILLG), 77–97 (GKFGLKTLAGSVFLPLVVFLT), 108–128 (LLAAIFGGVGIGIGIGIVYLG), and 149–169 (SLGKCLAIIDGMIVVTAMIVF).

This sequence belongs to the UPF0750 family.

It localises to the cell membrane. This is UPF0750 membrane protein YvjA (yvjA) from Bacillus subtilis (strain 168).